Consider the following 658-residue polypeptide: MSDDMSMGLPSSAGEHGVLRSMQEVAMSSQEASKMLRTYNIAWWGNNYYDVNELGHISVCPDPDVPEARVDLAQLVKTREAQGQRLPALFCFPQILQHRLRSINAAFKRARESYGYNGDYFLVYPIKVNQHRRVIESLIHSGEPLGLEAGSKAELMAVLAHAGMTRSVIVCNGYKDREYIRLALIGEKMGHKVYLVIEKMSEIAIVLDEAERLNVVPRLGVRARLASQGSGKWQSSGGEKSKFGLAATQVLQLVETLREAGRLDSLQLLHFHLGSQMANIRDIATGVRESARFYVELHKLGVNIQCFDVGGGLGVDYEGTRSQSDCSVNYGLNEYANNIIWAIGDACEENGLPHPTVITESGRAVTAHHTVLVSNIIGVERNEYTVPTAPAEDAPRALQSMWETWQEMHEPGTRRSLREWLHDSQMDLHDIHIGYSSGTFSLQERAWAEQLYLSMCHEVQKQLDPQNRAHRPIIDELQERMADKMYVNFSLFQSMPDAWGIDQLFPVLPLEGLDQVPERRAVLLDITCDSDGAIDHYIDGDGIATTMPMPEYDPENPPMLGFFMVGAYQEILGNMHNLFGDTEAVDVFVFPDGSVEVELSDEGDTVADMLQYVQLDPKTLLTQFRDQVKKTDLDAELQQQFLEEFEAGLYGYTYLEDE.

Lys-127 carries the N6-(pyridoxal phosphate)lysine modification. 307–317 (FDVGGGLGVDY) provides a ligand contact to substrate.

The protein belongs to the Orn/Lys/Arg decarboxylase class-II family. SpeA subfamily. Homotetramer. Mg(2+) serves as cofactor. It depends on pyridoxal 5'-phosphate as a cofactor.

It localises to the periplasm. The catalysed reaction is L-arginine + H(+) = agmatine + CO2. It participates in amine and polyamine biosynthesis; agmatine biosynthesis; agmatine from L-arginine: step 1/1. Functionally, catalyzes the biosynthesis of agmatine from arginine. The chain is Biosynthetic arginine decarboxylase (speA) from Escherichia coli O157:H7.